The sequence spans 121 residues: MVNAVNVANVNSVPGLLDVPKINAVVTDNFRAKMVSNTDMIELAANKEAASFEQTILKAFDSMNAKQTNMDKLGEQMIVDPESVDVHDITMGMAEASLSLKLAQTIIDRLVKTWNDITTTR.

Belongs to the FliE family.

The protein localises to the bacterial flagellum basal body. In Treponema denticola (strain ATCC 35405 / DSM 14222 / CIP 103919 / JCM 8153 / KCTC 15104), this protein is Flagellar hook-basal body complex protein FliE.